Reading from the N-terminus, the 229-residue chain is Dolichyldiphosphatase 1 (229 aa).

4 helical membrane-spanning segments follow: residues 27 to 47, 94 to 114, 120 to 140, and 156 to 176; these read LFNA…ITLI, MPSS…LFYL, FGSK…AAGV, and FCGS…IEYI.

It belongs to the dolichyldiphosphatase family.

The protein resides in the endoplasmic reticulum membrane. The enzyme catalyses a di-trans,poly-cis-dolichyl diphosphate + H2O = a di-trans,poly-cis-dolichyl phosphate + phosphate + H(+). It participates in protein modification; protein glycosylation. Required for efficient N-glycosylation. Necessary for maintaining optimal levels of dolichol-linked oligosaccharides. Hydrolyzes dolichyl pyrophosphate at a very high rate and dolichyl monophosphate at a much lower rate. Does not act on phosphatidate. In Dictyostelium discoideum (Social amoeba), this protein is Dolichyldiphosphatase 1 (dolpp1).